A 499-amino-acid chain; its full sequence is Maturase K (499 aa).

The protein belongs to the intron maturase 2 family. MatK subfamily.

The protein localises to the plastid. The protein resides in the chloroplast. Functionally, usually encoded in the trnK tRNA gene intron. Probably assists in splicing its own and other chloroplast group II introns. This is Maturase K from Macrozamia communis (Burrawang palm).